A 198-amino-acid polypeptide reads, in one-letter code: dTTP/UTP pyrophosphatase (198 aa).

Residue Asp75 is the Proton acceptor of the active site.

This sequence belongs to the Maf family. YhdE subfamily. It depends on a divalent metal cation as a cofactor.

It is found in the cytoplasm. The catalysed reaction is dTTP + H2O = dTMP + diphosphate + H(+). It catalyses the reaction UTP + H2O = UMP + diphosphate + H(+). In terms of biological role, nucleoside triphosphate pyrophosphatase that hydrolyzes dTTP and UTP. May have a dual role in cell division arrest and in preventing the incorporation of modified nucleotides into cellular nucleic acids. The sequence is that of dTTP/UTP pyrophosphatase from Wolbachia sp. subsp. Brugia malayi (strain TRS).